Reading from the N-terminus, the 312-residue chain is Malate dehydrogenase (312 aa).

Residues 12–17 (GAGFTG) and D36 contribute to the NAD(+) site. Substrate-binding residues include R87 and R93. Residues N100 and 123–125 (LTN) contribute to the NAD(+) site. Residue N125 coordinates substrate. S149 is subject to Phosphoserine. R156 serves as a coordination point for substrate. The active-site Proton acceptor is H180.

This sequence belongs to the LDH/MDH superfamily. MDH type 3 family.

The catalysed reaction is (S)-malate + NAD(+) = oxaloacetate + NADH + H(+). Catalyzes the reversible oxidation of malate to oxaloacetate. This Bacillus cytotoxicus (strain DSM 22905 / CIP 110041 / 391-98 / NVH 391-98) protein is Malate dehydrogenase.